Reading from the N-terminus, the 939-residue chain is Intimin (939 aa).

Residues 1-41 (MITHGFYARTRHKHKLKKTFIMLSAGLGLFFYVNQNSFANG) form the signal peptide. The segment at 40–153 (NGENYFKLGS…KLTKMSPDVT (114 aa)) is peptidoglycan-binding. The interval 40–153 (NGENYFKLGS…KLTKMSPDVT (114 aa)) is sufficient for homodimerization. The tract at residues 40 to 212 (NGENYFKLGS…LQAWLQHYGT (173 aa)) is required for periplasmic localization. Positions 63–112 (LFYTLKTGETVADLSKSQDINLSTIWSLNKHLYSSESEMMKAAPGQQIIL) constitute a LysM domain. The interval 189-430 (DTALGIAGNQ…PQYVNELRTL (242 aa)) is inverse autotransporter. The signature sequence for beta-barrel assembly machinery (BAM), which recognizes the unfolded beta-barrel in the periplasm stretch occupies residues 402 to 411 (LYSMQFRYQF). 2 consecutive Big-1 domains span residues 560–653 (VTDF…VIFV) and 660–751 (ITEI…VEFF). Residues 750-939 (FFTTLTIDDG…ESNAYATCVK (190 aa)) are required and sufficient for interaction with intimin receptor Tir. The tract at residues 842-939 (LIVPNMSKRV…ESNAYATCVK (98 aa)) is C-type lectin domain. An intimin receptor Tir-binding region spans residues 842–939 (LIVPNMSKRV…ESNAYATCVK (98 aa)). Cysteine 860 and cysteine 937 are disulfide-bonded.

The protein belongs to the intimin/invasin family. As to quaternary structure, homodimer. Interacts with Tir.

Its subcellular location is the cell outer membrane. In terms of biological role, an inverse autotransporter. Adhesin, which mediates attachment to the human intestine epithelial cells. Necessary for the production of attaching and effacing lesions on infected human tissue culture cells. Anchored to the outer membrane by binding to peptidoglycan (PGN) via its periplasmic domain, thus helping in receptor interactions during host invasion. PGN-binding may also aid in resisting mechanical and chemical stress during transit of the bacterium through the gastrointestinal tract of the host. Periplasmic domain binds purified E.coli PGN sacculi under acidic conditions in vitro and in vivo, but does not bind to chitin. Periplasmic domain binds PGN sacculi with an apparent dissociation constant (Kd) of 0.8 uM. No binding to PGN in vitro at normal physiological pH 7.4. This Escherichia coli O127:H6 (strain E2348/69 / EPEC) protein is Intimin.